Reading from the N-terminus, the 302-residue chain is Nucleotide-binding protein Rsph17029_0317 (302 aa).

15–22 is a binding site for ATP; the sequence is GPSGAGRT. GTP is bound at residue 62-65; the sequence is DVRN.

Belongs to the RapZ-like family.

In terms of biological role, displays ATPase and GTPase activities. The chain is Nucleotide-binding protein Rsph17029_0317 from Cereibacter sphaeroides (strain ATCC 17029 / ATH 2.4.9) (Rhodobacter sphaeroides).